We begin with the raw amino-acid sequence, 175 residues long: ATP synthase subunit delta (175 aa).

The protein belongs to the ATPase delta chain family. F-type ATPases have 2 components, F(1) - the catalytic core - and F(0) - the membrane proton channel. F(1) has five subunits: alpha(3), beta(3), gamma(1), delta(1), epsilon(1). F(0) has three main subunits: a(1), b(2) and c(10-14). The alpha and beta chains form an alternating ring which encloses part of the gamma chain. F(1) is attached to F(0) by a central stalk formed by the gamma and epsilon chains, while a peripheral stalk is formed by the delta and b chains.

It is found in the cell membrane. Functionally, f(1)F(0) ATP synthase produces ATP from ADP in the presence of a proton or sodium gradient. F-type ATPases consist of two structural domains, F(1) containing the extramembraneous catalytic core and F(0) containing the membrane proton channel, linked together by a central stalk and a peripheral stalk. During catalysis, ATP synthesis in the catalytic domain of F(1) is coupled via a rotary mechanism of the central stalk subunits to proton translocation. In terms of biological role, this protein is part of the stalk that links CF(0) to CF(1). It either transmits conformational changes from CF(0) to CF(1) or is implicated in proton conduction. This is ATP synthase subunit delta from Lactococcus lactis subsp. cremoris (strain MG1363).